Consider the following 274-residue polypeptide: NH(3)-dependent NAD(+) synthetase (274 aa).

46–53 (GISGGQDS) is an ATP binding site. Aspartate 52 serves as a coordination point for Mg(2+). Residue arginine 140 coordinates deamido-NAD(+). Threonine 160 is a binding site for ATP. Mg(2+) is bound at residue glutamate 165. Residues lysine 173 and aspartate 180 each contribute to the deamido-NAD(+) site. ATP contacts are provided by lysine 189 and threonine 211. 260 to 261 (HK) contributes to the deamido-NAD(+) binding site.

Belongs to the NAD synthetase family. Homodimer.

The catalysed reaction is deamido-NAD(+) + NH4(+) + ATP = AMP + diphosphate + NAD(+) + H(+). The protein operates within cofactor biosynthesis; NAD(+) biosynthesis; NAD(+) from deamido-NAD(+) (ammonia route): step 1/1. Its function is as follows. Catalyzes the ATP-dependent amidation of deamido-NAD to form NAD. Uses ammonia as a nitrogen source. This Streptococcus equi subsp. equi (strain 4047) protein is NH(3)-dependent NAD(+) synthetase.